The following is a 120-amino-acid chain: Ribonuclease P protein component (120 aa).

It belongs to the RnpA family. As to quaternary structure, consists of a catalytic RNA component (M1 or rnpB) and a protein subunit.

The catalysed reaction is Endonucleolytic cleavage of RNA, removing 5'-extranucleotides from tRNA precursor.. RNaseP catalyzes the removal of the 5'-leader sequence from pre-tRNA to produce the mature 5'-terminus. It can also cleave other RNA substrates such as 4.5S RNA. The protein component plays an auxiliary but essential role in vivo by binding to the 5'-leader sequence and broadening the substrate specificity of the ribozyme. This is Ribonuclease P protein component from Dictyoglomus thermophilum (strain ATCC 35947 / DSM 3960 / H-6-12).